The chain runs to 540 residues: MAKDIKFSADARSAMVRGVDILADTVKVTLGPKGRNVVLEKSFGSPLITNDGVTIAKEIELEDHFENMGAKLVSEVASKTNDIAGDGTTTATVLTQAIVREGIKNVTAGANPIGIRRGIETAVATAVEALKANSVPVSNKEAIAQVAAVSSRSEKVGEYISEAMEKVGNDGVITIEESKGMETELDVVEGMQFDRGYLSQYMVTDNEKMVADLDNPYILITDKKISNIQEILPLLENILKTSRPLLIIADDVDGEALPTLVLNKIRGTFNVVAVKAPGFGDRRKAMLEDIAILTGGTVITEDLGLELKDATIEALGQASKVTVDKDSTVIVEGSGAAEAIANRVAVIKSQIESATSEFDKEKLQERLAKLSGGVAVIKVGAATETELKEMKLRIEDALNATRAAVEEGIVSGGGTAFVNVLNTVEALDLSGDEATGRNIVLRALEEPIRQIAINAGFEGSIVIDRLKNSEVGTGFNAATGEWVDMIEAGIIDPVKVTRSALQNAASVASLILTTEAVVASQPEPASPAPAMDPSMMGGMM.

Residues 29–32 (TLGP), 86–90 (DGTTT), Gly-413, 476–478 (NAA), and Asp-492 contribute to the ATP site.

The protein belongs to the chaperonin (HSP60) family. As to quaternary structure, forms a cylinder of 14 subunits composed of two heptameric rings stacked back-to-back. Interacts with the co-chaperonin GroES.

It is found in the cytoplasm. It carries out the reaction ATP + H2O + a folded polypeptide = ADP + phosphate + an unfolded polypeptide.. In terms of biological role, together with its co-chaperonin GroES, plays an essential role in assisting protein folding. The GroEL-GroES system forms a nano-cage that allows encapsulation of the non-native substrate proteins and provides a physical environment optimized to promote and accelerate protein folding. In Streptococcus constellatus, this protein is Chaperonin GroEL.